Reading from the N-terminus, the 516-residue chain is Protein phosphatase 1H (516 aa).

2 disordered regions span residues 102 to 122 and 181 to 202; these read ADPS…PSGD and PPTC…SGSQ. The region spanning 106–506 is the PPM-type phosphatase domain; that stretch reads SVSYTPSRRR…DDISVFIIPL (401 aa). Polar residues predominate over residues 190–202; the sequence is PNPQLHASASGSQ.

The protein belongs to the PP2C family.

It localises to the nucleus. It is found in the cytoplasm. It carries out the reaction O-phospho-L-seryl-[protein] + H2O = L-seryl-[protein] + phosphate. It catalyses the reaction O-phospho-L-threonyl-[protein] + H2O = L-threonyl-[protein] + phosphate. The polypeptide is Protein phosphatase 1H (ppm1h) (Danio rerio (Zebrafish)).